Reading from the N-terminus, the 506-residue chain is Bone morphogenetic protein 6 (506 aa).

An N-terminal signal peptide occupies residues 1-20; that stretch reads MPGLGRRAQWLCWWWGLLCS. A propeptide spanning residues 21 to 367 is cleaved from the precursor; that stretch reads CGPPPLRPPL…VSEVHVRTTR (347 aa). Disordered stretches follow at residues 44 to 64, 87 to 125, and 139 to 195; these read AGGS…SGFL, PHRP…RLKS, and KDDE…PLTS. A compositionally biased stretch (low complexity) spans 96–112; the sequence is LQQPQSPVLPQQQQSQQ. A compositionally biased stretch (acidic residues) spans 140–153; sequence DDEEDGVSEGEGLE. N-linked (GlcNAc...) asparagine glycosylation is found at asparagine 234, asparagine 262, asparagine 379, asparagine 397, and asparagine 447. The interval 366–397 is disordered; that stretch reads TRSASSRRRQQSRNRSTQSQDVSRGSSASDYN. The span at 386–397 shows a compositional bias: polar residues; the sequence is DVSRGSSASDYN. 3 disulfide bridges follow: cysteine 405–cysteine 471, cysteine 434–cysteine 503, and cysteine 438–cysteine 505.

This sequence belongs to the TGF-beta family. As to quaternary structure, interacts with SOSTDC1. Interacts (when glycosylated) with type I receptor ACVR1; the interaction may induce HAMP expression. Interacts with type II receptor ACVR2B. Interacts with Hemojuvelin/HJV. Interacts with ERFE; the interaction inhibits BMP-induced transcription of HAMP. Interacts with BMPR1A/ALK3. Forms heterodimers with BMP2 in vitro; the heterodimer then binds to its receptor BMPR1A /ALK3 and may induce HAMP expression.

Its subcellular location is the secreted. Functionally, growth factor of the TGF-beta superfamily that plays essential roles in many developmental processes including cartilage and bone formation. Also plays an important role in the regulation of HAMP/hepcidin expression and iron metabolism by acting as a ligand for hemojuvelin/HJV. Also acts to promote expression of HAMP, potentially via the interaction with its receptor BMPR1A/ALK3. Initiates the canonical BMP signaling cascade by associating with type I receptor ACVR1 and type II receptor ACVR2B. In turn, ACVR1 propagates signal by phosphorylating SMAD1/5/8 that travel to the nucleus and act as activators and repressors of transcription of target. Can also signal through non-canonical pathway such as TAZ-Hippo signaling cascade to modulate VEGF signaling by regulating VEGFR2 expression. The chain is Bone morphogenetic protein 6 (Bmp6) from Rattus norvegicus (Rat).